A 118-amino-acid chain; its full sequence is Large ribosomal subunit protein eL18 (118 aa).

It belongs to the eukaryotic ribosomal protein eL18 family.

The protein is Large ribosomal subunit protein eL18 of Sulfurisphaera tokodaii (strain DSM 16993 / JCM 10545 / NBRC 100140 / 7) (Sulfolobus tokodaii).